The following is a 461-amino-acid chain: MTLRHQIIALAIVPLVISILAITTFITWQSANLAKNSIDTFEQNMLKTKEAEILNLTNLALSAIQTIYDKAGSDDEAAKQQVAAILTSLDYGKDGYFFVYDYDGNNIVHPRQSFRHGHNWLDLTDPDGDKVIAELIATAKAGGGLHQYKWQKPSTGQIADKLSFVVSLDKWHWVVGTGVYLDDVFAQSAAANAGMRANIKRTFVIVALIDVPSVLVVFTTCMLLTFHERRMADSRLKALTQRVIDTQEEERARLARELHDGISQNLVGVRYAMDLAGRKVRTNVDDAALTIDRGVEALNGAIKEIRRLSHDLRPRVLDDLGLTAALEALCYHFAERTGIETKIDASGFTDTLKAEANTALYRVAQEAFNNVERHAGASKLAVKLWSDNGRARMTVSDNGAGFDGIKDGMSGRSGLGLRNMQERMAHFRGLLLINSSEAGTTLTAMMPKSANRPVNRQAEAA.

Transmembrane regions (helical) follow at residues 7 to 27 (IIAL…TFIT) and 203 to 223 (FVIV…TCML). His-259 carries the phosphohistidine; by autocatalysis modification. In terms of domain architecture, Histidine kinase spans 360–450 (LYRVAQEAFN…TLTAMMPKSA (91 aa)).

It localises to the cell membrane. It carries out the reaction ATP + protein L-histidine = ADP + protein N-phospho-L-histidine.. Its function is as follows. Member of the two-component regulatory system MctS/MctR, which activates mctP expression. This is Sensor histidine kinase MctS from Rhizobium johnstonii (strain DSM 114642 / LMG 32736 / 3841) (Rhizobium leguminosarum bv. viciae).